A 476-amino-acid chain; its full sequence is MKPTLPNYDQSSVLIVGDVMLDRYWGGPTSRISPEAPVPVVKVEKIEERPGGAANVAMNIAALGGDAHLVGLVGEDEPAQALTTTLESLKVHCDFVALPEFPTITKLRVMSRGQQLIRLDFEDSFHDVAAEPIISRMQQALSSVKAVVLSDYAKGALEHVQLMIQEARKVNVPVFIDPKGADFERYRGATLLTPNMLEFETVVGKVKDEDDLVAKGQQIIEEFDFEALLVTRSEHGMTLLRRNMEPLHLPTQAREVFDVTGAGDTVISVLAASVSTGKPLDEACALANAAAGVVVGKLGTSTLSTIELAEAIHGSQDSGFGIIGEEQLISAVKQARARGEKVVMTNGCFDILHAGHVSYLNHAAELGDRLIVAVNTNESVQRLKGPGRPINPTDRRMAVLAGLGAVDWVVPFSEDTPQRLISQVLPSLLVKGGDYAIEDIAGGAEVIAAGGEVKVLNFEDGCSTTGIIEAIKGGRG.

Positions 1–319 (MKPTLPNYDQ…EAIHGSQDSG (319 aa)) are ribokinase. 195–198 (NMLE) contacts ATP. D264 is an active-site residue. A cytidylyltransferase region spans residues 344–476 (MTNGCFDILH…IIEAIKGGRG (133 aa)).

This sequence in the N-terminal section; belongs to the carbohydrate kinase PfkB family. In the C-terminal section; belongs to the cytidylyltransferase family. Homodimer.

The enzyme catalyses D-glycero-beta-D-manno-heptose 7-phosphate + ATP = D-glycero-beta-D-manno-heptose 1,7-bisphosphate + ADP + H(+). It carries out the reaction D-glycero-beta-D-manno-heptose 1-phosphate + ATP + H(+) = ADP-D-glycero-beta-D-manno-heptose + diphosphate. The protein operates within nucleotide-sugar biosynthesis; ADP-L-glycero-beta-D-manno-heptose biosynthesis; ADP-L-glycero-beta-D-manno-heptose from D-glycero-beta-D-manno-heptose 7-phosphate: step 1/4. It functions in the pathway nucleotide-sugar biosynthesis; ADP-L-glycero-beta-D-manno-heptose biosynthesis; ADP-L-glycero-beta-D-manno-heptose from D-glycero-beta-D-manno-heptose 7-phosphate: step 3/4. In terms of biological role, catalyzes the phosphorylation of D-glycero-D-manno-heptose 7-phosphate at the C-1 position to selectively form D-glycero-beta-D-manno-heptose-1,7-bisphosphate. Its function is as follows. Catalyzes the ADP transfer from ATP to D-glycero-beta-D-manno-heptose 1-phosphate, yielding ADP-D-glycero-beta-D-manno-heptose. The polypeptide is Bifunctional protein HldE (Aliivibrio fischeri (strain ATCC 700601 / ES114) (Vibrio fischeri)).